The following is a 341-amino-acid chain: ATP synthase subunit a 2 (341 aa).

The first 33 residues, 1-33 (MKRVKVIQIKGFFRVMALLAPLLLNAYLPVQAS), serve as a signal peptide directing secretion. The next 6 membrane-spanning stretches (helical) occupy residues 112-132 (VVMLWIVSAILLVLFSFVGAA), 173-193 (LPYLLTVFMFILLCNILGLIP), 195-215 (GATATGNINVTLTLAVFTFFI), 242-262 (WIIMIPIEVIGLFTKPFALTV), 273-293 (IVILSLIFISFILKSYVVAAA), and 307-327 (IFVAFLQAFIFTMLSALFIGL).

Belongs to the ATPase A chain family. In terms of assembly, F-type ATPases have 2 components, CF(1) - the catalytic core - and CF(0) - the membrane proton channel. CF(1) has five subunits: alpha(3), beta(3), gamma(1), delta(1), epsilon(1). CF(0) has four main subunits: a, b, b' and c.

It is found in the cell inner membrane. Its function is as follows. Key component of the proton channel; it plays a direct role in the translocation of protons across the membrane. The chain is ATP synthase subunit a 2 from Chlorobium luteolum (strain DSM 273 / BCRC 81028 / 2530) (Pelodictyon luteolum).